Consider the following 521-residue polypeptide: Bifunctional purine biosynthesis protein PurH (521 aa).

The MGS-like domain maps to 1 to 147 (MAKITRALIS…KNNADVTVVV (147 aa)).

It belongs to the PurH family.

It catalyses the reaction (6R)-10-formyltetrahydrofolate + 5-amino-1-(5-phospho-beta-D-ribosyl)imidazole-4-carboxamide = 5-formamido-1-(5-phospho-D-ribosyl)imidazole-4-carboxamide + (6S)-5,6,7,8-tetrahydrofolate. The catalysed reaction is IMP + H2O = 5-formamido-1-(5-phospho-D-ribosyl)imidazole-4-carboxamide. It participates in purine metabolism; IMP biosynthesis via de novo pathway; 5-formamido-1-(5-phospho-D-ribosyl)imidazole-4-carboxamide from 5-amino-1-(5-phospho-D-ribosyl)imidazole-4-carboxamide (10-formyl THF route): step 1/1. It functions in the pathway purine metabolism; IMP biosynthesis via de novo pathway; IMP from 5-formamido-1-(5-phospho-D-ribosyl)imidazole-4-carboxamide: step 1/1. The sequence is that of Bifunctional purine biosynthesis protein PurH from Geotalea uraniireducens (strain Rf4) (Geobacter uraniireducens).